Reading from the N-terminus, the 92-residue chain is Elongation factor 1-beta (92 aa).

The protein belongs to the EF-1-beta/EF-1-delta family.

Its function is as follows. Promotes the exchange of GDP for GTP in EF-1-alpha/GDP, thus allowing the regeneration of EF-1-alpha/GTP that could then be used to form the ternary complex EF-1-alpha/GTP/AAtRNA. This chain is Elongation factor 1-beta (ef1b), found in Pyrobaculum aerophilum (strain ATCC 51768 / DSM 7523 / JCM 9630 / CIP 104966 / NBRC 100827 / IM2).